The chain runs to 204 residues: Tetraspanin-13 (204 aa).

Residues 1–19 lie on the Cytoplasmic side of the membrane; it reads MVCGGFSCSKNCLCALNLL. The helical transmembrane segment at 20–40 threads the bilayer; sequence YTLVSLLLIGIAAWGIGFGLI. The Extracellular segment spans residues 41–44; it reads SSLR. The chain crosses the membrane as a helical span at residues 45–65; the sequence is VVGVVIAVGIFLFLIALVGLI. The Cytoplasmic segment spans residues 66 to 72; sequence GAVKHHQ. Residues 73–93 traverse the membrane as a helical segment; that stretch reads VLLFFYMIILLLVFIVQFSVS. Residues 94–167 lie on the Extracellular side of the membrane; sequence CACLALNREQ…IGEYAGEVLR (74 aa). Asn-113 and Asn-137 each carry an N-linked (GlcNAc...) asparagine glycan. Ser-143 bears the Phosphoserine mark. The helical transmembrane segment at 168 to 188 threads the bilayer; sequence FVGGIGLFFSFTEILGVWLTY. At 189–204 the chain is on the cytoplasmic side; the sequence is RYRNQKDPRANPSAFL.

Belongs to the tetraspanin (TM4SF) family.

The protein localises to the membrane. This Mus musculus (Mouse) protein is Tetraspanin-13 (Tspan13).